A 488-amino-acid polypeptide reads, in one-letter code: MSFNHKTIEELHDLLVAKEISATELTQATLEDIKSREEAVGSFITVSEEVALKQAAAIDAKGIDADNLMSGIPLAVKDNISTKEILTTAASKMLYNYEPIFNATSVANAYAKDMIVIGKTNMDEFAMGGSTETSYFKKTKNAWDHTKVPGGSSGGSATAVASGQVRLSLGSDTGGSIRQPAAFNSVVGLKPTYGTVSRYGLIAFGSSLDQIGPFAPTVKENAQLLNVIASSDVKDATSAPVRIADYTSKIGRDIKGMKIALPKEYLGEGIDPEIKETVLASVKQFEALGATVEEVSLPHSKYGVAVYYIIASSEASSNLQRFDGIRYGFRADDAKNLDEIYVNTRSQGFGDEVKRRIMLGTFSLSSGYYDAYFKKAGQVRTLIIQDFDKVFADYDLILGPTTPTVAFGLDTLNHDPVAMYLADLLTIPVNLAGLPGISIPAGFVDGLPVGLQLIGPKYAEETIYQAAAAFEAVTDYHKQQPIIFGGDK.

Active-site charge relay system residues include Lys-77 and Ser-152. Ser-176 acts as the Acyl-ester intermediate in catalysis.

This sequence belongs to the amidase family. GatA subfamily. In terms of assembly, heterotrimer of A, B and C subunits.

It catalyses the reaction L-glutamyl-tRNA(Gln) + L-glutamine + ATP + H2O = L-glutaminyl-tRNA(Gln) + L-glutamate + ADP + phosphate + H(+). Allows the formation of correctly charged Gln-tRNA(Gln) through the transamidation of misacylated Glu-tRNA(Gln) in organisms which lack glutaminyl-tRNA synthetase. The reaction takes place in the presence of glutamine and ATP through an activated gamma-phospho-Glu-tRNA(Gln). The sequence is that of Glutamyl-tRNA(Gln) amidotransferase subunit A from Streptococcus pyogenes serotype M1.